Consider the following 477-residue polypeptide: Protoporphyrinogen oxidase (477 aa).

FAD contacts are provided by residues 9 to 14 (GGGISG), tryptophan 42, 57 to 60 (GPRG), valine 257, alanine 449, and 454 to 456 (VAV).

Belongs to the protoporphyrinogen/coproporphyrinogen oxidase family. Protoporphyrinogen oxidase subfamily. Monomer. Homodimer. Requires FAD as cofactor.

The protein resides in the mitochondrion inner membrane. The enzyme catalyses protoporphyrinogen IX + 3 O2 = protoporphyrin IX + 3 H2O2. The protein operates within porphyrin-containing compound metabolism; protoporphyrin-IX biosynthesis; protoporphyrin-IX from protoporphyrinogen-IX: step 1/1. Catalyzes the 6-electron oxidation of protoporphyrinogen-IX to form protoporphyrin-IX. This Macaca fascicularis (Crab-eating macaque) protein is Protoporphyrinogen oxidase (PPOX).